A 244-amino-acid chain; its full sequence is 7-cyano-7-deazaguanine synthase (244 aa).

14–24 (FSGGQDSATCV) lines the ATP pocket. Residues C202, C217, C220, and C223 each contribute to the Zn(2+) site.

It belongs to the QueC family. Zn(2+) is required as a cofactor.

It catalyses the reaction 7-carboxy-7-deazaguanine + NH4(+) + ATP = 7-cyano-7-deazaguanine + ADP + phosphate + H2O + H(+). It functions in the pathway purine metabolism; 7-cyano-7-deazaguanine biosynthesis. Functionally, catalyzes the ATP-dependent conversion of 7-carboxy-7-deazaguanine (CDG) to 7-cyano-7-deazaguanine (preQ(0)). The sequence is that of 7-cyano-7-deazaguanine synthase from Burkholderia multivorans (strain ATCC 17616 / 249).